We begin with the raw amino-acid sequence, 299 residues long: ATP phosphoribosyltransferase (299 aa).

This sequence belongs to the ATP phosphoribosyltransferase family. Long subfamily. Equilibrium between an active dimeric form, an inactive hexameric form and higher aggregates. Interconversion between the various forms is largely reversible and is influenced by the natural substrates and inhibitors of the enzyme. Mg(2+) is required as a cofactor.

The protein resides in the cytoplasm. The catalysed reaction is 1-(5-phospho-beta-D-ribosyl)-ATP + diphosphate = 5-phospho-alpha-D-ribose 1-diphosphate + ATP. The protein operates within amino-acid biosynthesis; L-histidine biosynthesis; L-histidine from 5-phospho-alpha-D-ribose 1-diphosphate: step 1/9. Feedback inhibited by histidine. In terms of biological role, catalyzes the condensation of ATP and 5-phosphoribose 1-diphosphate to form N'-(5'-phosphoribosyl)-ATP (PR-ATP). Has a crucial role in the pathway because the rate of histidine biosynthesis seems to be controlled primarily by regulation of HisG enzymatic activity. This chain is ATP phosphoribosyltransferase, found in Salmonella dublin (strain CT_02021853).